We begin with the raw amino-acid sequence, 449 residues long: Dynein regulatory complex protein 10 (449 aa).

Residues 90–125 (AVREHEDLCQVLLENVRCLKEKERQLQEQKEAEEEG) are a coiled coil. The IQ domain maps to 400 to 429 (MVRAATLIQALWKGYLVRSLLRSKKKRGKG). The interval 422 to 449 (SKKKRGKGKAKDKEKGKQKGKEKGKGKK) is disordered. Residues 430-449 (KAKDKEKGKQKGKEKGKGKK) are compositionally biased toward basic and acidic residues.

The protein belongs to the DRC10 family. In terms of assembly, component of the nexin-dynein regulatory complex (N-DRC). Interacts with CFAP52.

The protein resides in the cytoplasm. Its subcellular location is the cytoskeleton. It is found in the flagellum axoneme. In terms of biological role, component of the nexin-dynein regulatory complex (N-DRC), a key regulator of ciliary/flagellar motility which maintains the alignment and integrity of the distal axoneme and regulates microtubule sliding in motile axonemes. This is Dynein regulatory complex protein 10 (IQCD) from Homo sapiens (Human).